The following is a 133-amino-acid chain: Nickel-responsive regulator (133 aa).

4 residues coordinate Ni(2+): H76, H87, H89, and C95.

The protein belongs to the transcriptional regulatory CopG/NikR family. As to quaternary structure, homotetramer. It depends on Ni(2+) as a cofactor.

In terms of biological role, transcriptional repressor of the nikABCDE operon. Is active in the presence of excessive concentrations of intracellular nickel. The polypeptide is Nickel-responsive regulator (Escherichia coli (strain SMS-3-5 / SECEC)).